The primary structure comprises 572 residues: Beta-fructofuranosidase, insoluble isoenzyme CWINV5 (572 aa).

A signal peptide spans 1 to 23 (MANIVWCNIAMFLLVSLFLTDDA). Substrate-binding positions include 54 to 57 (WMND) and Q73. The active site involves D57. The N-linked (GlcNAc...) asparagine glycan is linked to N84. 118–119 (WS) provides a ligand contact to substrate. Residues N152 and N179 are each glycosylated (N-linked (GlcNAc...) asparagine). Substrate contacts are provided by residues 184–185 (RD) and E239. N333 and N438 each carry an N-linked (GlcNAc...) asparagine glycan. A disulfide bridge connects residues C434 and C481.

Belongs to the glycosyl hydrolase 32 family. Expressed in flowers, and, to a lower extent, in leaves.

Its subcellular location is the secreted. It is found in the extracellular space. The protein resides in the apoplast. It localises to the cell wall. It catalyses the reaction Hydrolysis of terminal non-reducing beta-D-fructofuranoside residues in beta-D-fructofuranosides.. The protein is Beta-fructofuranosidase, insoluble isoenzyme CWINV5 (CWINV5) of Arabidopsis thaliana (Mouse-ear cress).